Consider the following 671-residue polypeptide: Protein KHNYN (671 aa).

Disordered regions lie at residues 234-274 (RVAG…LSGE), 294-327 (EVAP…AHVP), 344-402 (HNGS…GGNL), and 577-626 (GPTL…RKTR). Over residues 250–272 (TVEKEERKQDAVRDMGSGRKELS) the composition is skewed to basic and acidic residues. Positions 351–365 (PRVPSPPPAPEPPWP) are enriched in pro residues. Position 355 is a phosphoserine (serine 355). Residues 367 to 381 (GDRDRDRDRGDRGDK) are compositionally biased toward basic and acidic residues. Residues 430–582 (LRHIVIDGSN…LGRNGPTLDE (153 aa)) enclose the RNase NYN domain. Residues 591–612 (QGSSKTQQPSKGSTEQANQQQG) show a composition bias toward polar residues.

The protein belongs to the N4BP1 family.

This chain is Protein KHNYN (Khnyn), found in Mus musculus (Mouse).